The sequence spans 490 residues: Cobyric acid synthase (490 aa).

The GATase cobBQ-type domain maps to 253-440 (KLRVAAPAAP…LHGVFDEPAA (188 aa)). C334 serves as the catalytic Nucleophile. The active site involves H432.

Belongs to the CobB/CobQ family. CobQ subfamily.

Its pathway is cofactor biosynthesis; adenosylcobalamin biosynthesis. Its function is as follows. Catalyzes amidations at positions B, D, E, and G on adenosylcobyrinic A,C-diamide. NH(2) groups are provided by glutamine, and one molecule of ATP is hydrogenolyzed for each amidation. This Chromobacterium violaceum (strain ATCC 12472 / DSM 30191 / JCM 1249 / CCUG 213 / NBRC 12614 / NCIMB 9131 / NCTC 9757 / MK) protein is Cobyric acid synthase.